The sequence spans 24 residues: U4-ctenitoxin-Co1b (24 aa).

Disulfide bonds are present. As to expression, expressed by the venom gland.

It is found in the secreted. Its function is as follows. Omega-agatoxins are antagonists of voltage-gated calcium channels (Cav). The sequence is that of U4-ctenitoxin-Co1b from Ctenus ornatus (Brazilian spider).